Here is a 447-residue protein sequence, read N- to C-terminus: Phosphoglucosamine mutase (447 aa).

S108 (phosphoserine intermediate) is an active-site residue. Mg(2+) is bound by residues S108, D247, D249, and D251. Phosphoserine is present on S108.

The protein belongs to the phosphohexose mutase family. Mg(2+) serves as cofactor. Post-translationally, activated by phosphorylation.

It carries out the reaction alpha-D-glucosamine 1-phosphate = D-glucosamine 6-phosphate. Its function is as follows. Catalyzes the conversion of glucosamine-6-phosphate to glucosamine-1-phosphate. The sequence is that of Phosphoglucosamine mutase from Bordetella avium (strain 197N).